The following is a 132-amino-acid chain: Replication enhancer protein (132 aa).

The protein belongs to the geminiviridae replication enhancer protein family. As to quaternary structure, homooligomer. Interacts with the replication-associated protein (REP). Interacts with host proliferating cell nuclear antigen (PCNA). Interacts with host retinoblastoma-related protein 1 (RBR1), and may thereby deregulate the host cell cycle. Oligomerization and interaction with PCNA are necessary for optimal replication enhancement.

Increases viral DNA accumulation. Enhances infectivity and symptom expression. This chain is Replication enhancer protein, found in Solanum lycopersicum (Tomato).